Consider the following 265-residue polypeptide: Deoxycytidine kinase 2 (265 aa).

Gly-31–Thr-39 lines the ATP pocket. Glu-56, Tyr-89, and Gln-100 together coordinate substrate. The active-site Proton acceptor is the Glu-130. Positions 131 and 136 each coordinate substrate. Arg-191 to Arg-195 contacts ATP. Position 200 (Glu-200) interacts with substrate. Glu-243 to Phe-245 contacts ATP.

This sequence belongs to the DCK/DGK family. Homodimer. As to expression, expressed at high levels in adult intestine, spleen, thymus and testis with lower levels in skeletal muscle and eye. In the embryo, expressed at higher levels until day 10 with lower levels in later stages.

The protein localises to the nucleus. It carries out the reaction 2'-deoxycytidine + a ribonucleoside 5'-triphosphate = dCMP + a ribonucleoside 5'-diphosphate + H(+). The catalysed reaction is 2'-deoxyguanosine + ATP = dGMP + ADP + H(+). The enzyme catalyses 2'-deoxyadenosine + ATP = dAMP + ADP + H(+). Functionally, phosphorylates the deoxyribonucleosides deoxyadenosine, deoxycytidine and deoxyguanosine. Shows highest activity against deoxyguanosine followed by deoxycytidine and then deoxyadenosine. Shows only very minor activity against deoxyuridine and deoxythymidine. The chain is Deoxycytidine kinase 2 from Gallus gallus (Chicken).